Consider the following 328-residue polypeptide: Sulfate adenylyltransferase subunit 2 (328 aa).

Residues 305–328 (ERQGRVIDRDSTGSMERKKAEGYF) form a disordered region.

It belongs to the PAPS reductase family. CysD subfamily. As to quaternary structure, heterodimer composed of CysD, the smaller subunit, and CysN.

It carries out the reaction sulfate + ATP + H(+) = adenosine 5'-phosphosulfate + diphosphate. It functions in the pathway sulfur metabolism; hydrogen sulfide biosynthesis; sulfite from sulfate: step 1/3. With CysN forms the ATP sulfurylase (ATPS) that catalyzes the adenylation of sulfate producing adenosine 5'-phosphosulfate (APS) and diphosphate, the first enzymatic step in sulfur assimilation pathway. APS synthesis involves the formation of a high-energy phosphoric-sulfuric acid anhydride bond driven by GTP hydrolysis by CysN coupled to ATP hydrolysis by CysD. The chain is Sulfate adenylyltransferase subunit 2 from Rhodopseudomonas palustris (strain BisB18).